We begin with the raw amino-acid sequence, 580 residues long: Formate--tetrahydrofolate ligase (580 aa).

65–72 (TPHGEGKT) contributes to the ATP binding site.

It belongs to the formate--tetrahydrofolate ligase family.

It catalyses the reaction (6S)-5,6,7,8-tetrahydrofolate + formate + ATP = (6R)-10-formyltetrahydrofolate + ADP + phosphate. It participates in one-carbon metabolism; tetrahydrofolate interconversion. This chain is Formate--tetrahydrofolate ligase, found in Shewanella baltica (strain OS223).